Here is a 271-residue protein sequence, read N- to C-terminus: Formamidopyrimidine-DNA glycosylase (271 aa).

Residue P2 is the Schiff-base intermediate with DNA of the active site. Residue E3 is the Proton donor of the active site. Residue K57 is the Proton donor; for beta-elimination activity of the active site. 3 residues coordinate DNA: H90, R109, and K151. The FPG-type zinc finger occupies H236–T270. R260 serves as the catalytic Proton donor; for delta-elimination activity.

The protein belongs to the FPG family. In terms of assembly, monomer. Zn(2+) serves as cofactor.

It carries out the reaction Hydrolysis of DNA containing ring-opened 7-methylguanine residues, releasing 2,6-diamino-4-hydroxy-5-(N-methyl)formamidopyrimidine.. The enzyme catalyses 2'-deoxyribonucleotide-(2'-deoxyribose 5'-phosphate)-2'-deoxyribonucleotide-DNA = a 3'-end 2'-deoxyribonucleotide-(2,3-dehydro-2,3-deoxyribose 5'-phosphate)-DNA + a 5'-end 5'-phospho-2'-deoxyribonucleoside-DNA + H(+). Functionally, involved in base excision repair of DNA damaged by oxidation or by mutagenic agents. Acts as a DNA glycosylase that recognizes and removes damaged bases. Has a preference for oxidized purines, such as 7,8-dihydro-8-oxoguanine (8-oxoG). Has AP (apurinic/apyrimidinic) lyase activity and introduces nicks in the DNA strand. Cleaves the DNA backbone by beta-delta elimination to generate a single-strand break at the site of the removed base with both 3'- and 5'-phosphates. This is Formamidopyrimidine-DNA glycosylase from Shewanella baltica (strain OS195).